Here is a 111-residue protein sequence, read N- to C-terminus: MGQFTVVSLGLLAMFLSLSGAKGDNCPASWISRNGVCNKLFPDRKTWLEAEKRTWKWSDRTSTNYFSWNQGEPNNVQDNENCVHLWAPSGYLKWNDEPCASLHPFICQYKL.

An N-terminal signal peptide occupies residues 1–23; it reads MGQFTVVSLGLLAMFLSLSGAKG. Cys-26 and Cys-37 are oxidised to a cystine. The region spanning 33-108 is the C-type lectin domain; it reads RNGVCNKLFP…CASLHPFICQ (76 aa). Residues 72–74 carry the Mannose-binding motif; it reads EPN. 3 residues coordinate Ca(2+): Glu-80, Asn-95, and Asp-96. Cys-82 and Cys-99 are oxidised to a cystine.

This sequence belongs to the true venom lectin family. In terms of tissue distribution, expressed by the venom gland.

It localises to the secreted. Functionally, mannose-binding lectin which recognizes specific carbohydrate structures and agglutinates a variety of animal cells by binding to cell-surface glycoproteins and glycolipids. May be a calcium-dependent lectin. The protein is C-type lectin lectoxin-Enh2 of Pseudoferania polylepis (Macleay's water snake).